Consider the following 116-residue polypeptide: MQAKEEKEFTLQERRCLIVWVYTLKPLKQLRRYGLIHYVSRKMKYVVIYMNEENIESNMEKINQLHFVRSVDKSYRPDVEMNFAEKIGTKAAYQEQEDDGYVVEELSTEIRLAENV.

The protein belongs to the UPF0298 family.

It is found in the cytoplasm. The polypeptide is UPF0298 protein EF_2453 (Enterococcus faecalis (strain ATCC 700802 / V583)).